The following is a 288-amino-acid chain: Thymidylate synthase (288 aa).

Residues Arg-21 and 150-151 (RR) each bind dUMP. Residue Cys-170 is the Nucleophile of the active site. DUMP-binding positions include 191 to 194 (RSGD), Asn-202, and 232 to 234 (HIY). Asp-194 provides a ligand contact to (6R)-5,10-methylene-5,6,7,8-tetrahydrofolate. Ala-287 is a (6R)-5,10-methylene-5,6,7,8-tetrahydrofolate binding site.

The protein belongs to the thymidylate synthase family. Bacterial-type ThyA subfamily. As to quaternary structure, homodimer.

It localises to the cytoplasm. The enzyme catalyses dUMP + (6R)-5,10-methylene-5,6,7,8-tetrahydrofolate = 7,8-dihydrofolate + dTMP. It functions in the pathway pyrimidine metabolism; dTTP biosynthesis. Its function is as follows. Catalyzes the reductive methylation of 2'-deoxyuridine-5'-monophosphate (dUMP) to 2'-deoxythymidine-5'-monophosphate (dTMP) while utilizing 5,10-methylenetetrahydrofolate (mTHF) as the methyl donor and reductant in the reaction, yielding dihydrofolate (DHF) as a by-product. This enzymatic reaction provides an intracellular de novo source of dTMP, an essential precursor for DNA biosynthesis. In Mesoplasma florum (strain ATCC 33453 / NBRC 100688 / NCTC 11704 / L1) (Acholeplasma florum), this protein is Thymidylate synthase.